Reading from the N-terminus, the 1637-residue chain is MSHSHPAGLLATYNSLTDKHLAGYFNNTRIRRHLLRSGLITRSGRILSEKEYKVNNMKQDHQKYIRECLARAIFHKVLDMERYHQLEIKRKLDTLARKERIQRLKGEHTRRFIEDNMPVLTPHPPAGPKTNRGHSVLAEEGRSSPLTLTAPRPYTAPGNMQPPVRLQPLLSSRQTRNGSKITSGSKPKGSLLESEALFPLGGKKAMMKFRNYMDHSQKEDLYQLPHINSYHTPVPPTPQPQAGKNFRDKRLESWRRKRLRPITAPNGLEPLFAKDPGRIYKTAPHSNAVITMVYFGKNVHLSYDDIDFRDEIKIYQQHCGGENLCVYKGKLLEKDTFQFISKRHHGFPFSLTFFLNGIQVNRISSCCEFKHRRSTRLGGKRGYFGFVCVEKASPCYRCIIAMGLDRKPSSTKPKKEKITEKKEEPPNKSQGKLRKDRMNAPSKRNEMERKESCVSAAFSAEEIKLGVKEVRTAIEEMEWKGKSGRDVWEEDQDNAVKYDYEEDFEVDDEKQDEKVDEDEDQADDQMSGGSKTPTESEKDNRNPEKKIETSSEKAHDSENEDTGCSDSEEDDRQDVKTMSSISSRSHPYSSESEDDSTEVGGEADSVSEEGSSRSSSSQDLRENDDPGKPHFPIEKYLETEIEEQEITEGHNGPWLTELSGMHVTEGKPTMGIQALSESEHKEPRRVASSEVRAKSQLQKEAGLPGVEEEVGQITGGAQEPGHCCSNTAPGLSPTDDGVTPMRKPEVNLGRGTEERAAISANEQPEQDAQEMHTLKEEAMKKDESSQPEDTDAHAGVREESGMQKDGTCHPQDAGIDVELRERVDMQEDGTCHPQGADMDVGLKERVGVQEDGTHYPQDADMDVGLRERVGMQEDGTHHSQDADMDVELKERVGMQEDGTCHPQDANMDVELKERVGMQEDGTCHPQDADMDVELEERTGMQEDGTHHPQGADVDLGLRERAGMQEDGTCYPQNANMDVGLREKAGISEVLLGERSPTGVLLASAEQSTEKGECYLNIASEAEAGTEGSSRHGEEQLIPTGKVAAEGSVFLSVEQARDRQKDEDLDRQALLQTQMEKERAVSEAGQELKAEFTDSGGLNSETLEEAAVLKEVGTSEVKEAEREVGSPKTDGDQGEEEALTELEVVGPVEDTGPERKAGSEETVLGGERAATERKDFLEEAPISASTGEVQASPREVFRGNHELCKEDTAREGVIADTESTAEQDLRAVFPGELAAAGGIEKVERLTPPLRETGSEREEETGPEVLKTEDLLGEQKVKGEEEGTAKEVGSEEEDRASRPEMEAHAKDVEPTGATELGEATKLLEDPPKERAITLSEATPQFGKSPKESEATATEHKGGEELPGQESKALWPQGRGLSHDGEGLLGAPGPEADKAQGPEGFFTARCEEWAAKELDSSAGSERLEEDQPLQAQREDIQRMTQGNLSGERLTRAVVVCGEAKAENPQGEGSEDKECPPGTVTGSLTGQNWNMGGNIVEAEEDPHGGGIEEPTAEQKEEESAESKSADGIPEASSAANAQKETWDGAGEALGEAAAEERTGTEDMAPRTEKVAVVEEVTSAGAMVETEQEQAPEAQDREGGETKASRHTGTAGEDTGSTGKDEEHQSGAAEEFRESVSQRETA.

Disordered stretches follow at residues 145–192 (PLTL…GSLL), 408–453 (PSST…KESC), 478–814 (EWKG…QDAG), 1111–1194 (VGTS…SPRE), 1238–1445 (IEKV…SGER), and 1457–1637 (KAEN…RETA). Over residues 169 to 185 (LLSSRQTRNGSKITSGS) the composition is skewed to polar residues. 3 stretches are compositionally biased toward basic and acidic residues: residues 416–426 (EKITEKKEEPP), 443–452 (KRNEMERKES), and 478–487 (EWKGKSGRDV). A compositionally biased stretch (acidic residues) spans 500–523 (YEEDFEVDDEKQDEKVDEDEDQAD). Basic and acidic residues predominate over residues 534-557 (TESEKDNRNPEKKIETSSEKAHDS). Positions 558–572 (ENEDTGCSDSEEDDR) are enriched in acidic residues. Low complexity-rich tracts occupy residues 579-590 (SSISSRSHPYSS) and 608-617 (EEGSSRSSSS). Composition is skewed to basic and acidic residues over residues 619–638 (DLRENDDPGKPHFPIEKYLE), 677–693 (ESEHKEPRRVASSEVRA), 769–802 (QEMHTLKEEAMKKDESSQPEDTDAHAGVREESGM), 1115–1130 (EVKEAEREVGSPKTDG), 1264–1307 (LKTE…KDVE), 1319–1329 (KLLEDPPKERA), 1342–1357 (SPKESEATATEHKGGE), and 1402–1412 (RCEEWAAKELD). A compositionally biased stretch (polar residues) spans 1476–1487 (VTGSLTGQNWNM). 3 stretches are compositionally biased toward basic and acidic residues: residues 1550-1568 (AEERTGTEDMAPRTEKVAV), 1589-1599 (AQDREGGETKA), and 1614-1637 (GKDEEHQSGAAEEFRESVSQRETA).

The protein resides in the cell projection. It is found in the cilium. Its subcellular location is the cytoplasm. In terms of biological role, component of the primary cilium that controls cilium formation and length. May function within retrograde intraflagellar transport (IFT)-associated pathways to remove signaling proteins from primary cilia. Also involved in neuronal vesicle biogenesis and neurotransmitter vesicular function. This Mus musculus (Mouse) protein is Glutamate rich 3.